The sequence spans 63 residues: Large ribosomal subunit protein uL30 (63 aa).

The protein belongs to the universal ribosomal protein uL30 family. As to quaternary structure, part of the 50S ribosomal subunit.

The protein is Large ribosomal subunit protein uL30 of Bradyrhizobium sp. (strain BTAi1 / ATCC BAA-1182).